Reading from the N-terminus, the 187-residue chain is Core-binding factor subunit beta (187 aa).

Serine 10 is modified (phosphoserine; by CK2). Residues 139-187 (AQQAFEEARRRTREFEDRDRSHREEMEARRQQDPSPGSNLGGGDDLKLR) are disordered. Positions 144-170 (EEARRRTREFEDRDRSHREEMEARRQQ) are enriched in basic and acidic residues. At serine 159 the chain carries Phosphoserine; by PKC.

Belongs to the CBF-beta family. Heterodimer with RUNX1, RUNX2 and RUNX3. Interacts with COPRS. Found in a complex with PRMT5 and RUNX1. Expressed in all tissues tested. Highest level in thymus, but also abundantly expressed in muscle, lung and brain.

The protein localises to the nucleus. Functionally, forms the heterodimeric complex core-binding factor (CBF) with RUNX family proteins (RUNX1, RUNX2, and RUNX3). RUNX members modulate the transcription of their target genes through recognizing the core consensus binding sequence 5'-TGTGGT-3', or very rarely, 5'-TGCGGT-3', within their regulatory regions via their runt domain, while CBFB is a non-DNA-binding regulatory subunit that allosterically enhances the sequence-specific DNA-binding capacity of RUNX. The heterodimers bind to the core site of a number of enhancers and promoters, including murine leukemia virus, polyomavirus enhancer, T-cell receptor enhancers, LCK, IL3 and GM-CSF promoters. CBF complexes repress ZBTB7B transcription factor during cytotoxic (CD8+) T cell development. They bind to RUNX-binding sequence within the ZBTB7B locus acting as transcriptional silencer and allowing for cytotoxic T cell differentiation. In Mus musculus (Mouse), this protein is Core-binding factor subunit beta (Cbfb).